A 327-amino-acid chain; its full sequence is Malate dehydrogenase (327 aa).

11–17 (GAAGQIS) is an NAD(+) binding site. Arginine 92 and arginine 98 together coordinate substrate. NAD(+) contacts are provided by residues asparagine 105, glutamine 112, and 129–131 (VGN). Substrate contacts are provided by asparagine 131 and arginine 162. Histidine 187 (proton acceptor) is an active-site residue.

The protein belongs to the LDH/MDH superfamily. MDH type 2 family.

The enzyme catalyses (S)-malate + NAD(+) = oxaloacetate + NADH + H(+). In terms of biological role, catalyzes the reversible oxidation of malate to oxaloacetate. This chain is Malate dehydrogenase, found in Cellvibrio japonicus (strain Ueda107) (Pseudomonas fluorescens subsp. cellulosa).